We begin with the raw amino-acid sequence, 443 residues long: Phosphoglucosamine mutase (443 aa).

The Phosphoserine intermediate role is filled by Ser-101. Mg(2+) is bound by residues Ser-101, Asp-240, Asp-242, and Asp-244. Residue Ser-101 is modified to Phosphoserine.

It belongs to the phosphohexose mutase family. Mg(2+) serves as cofactor. Post-translationally, activated by phosphorylation.

The catalysed reaction is alpha-D-glucosamine 1-phosphate = D-glucosamine 6-phosphate. Its function is as follows. Catalyzes the conversion of glucosamine-6-phosphate to glucosamine-1-phosphate. The polypeptide is Phosphoglucosamine mutase (Psychromonas ingrahamii (strain DSM 17664 / CCUG 51855 / 37)).